Reading from the N-terminus, the 754-residue chain is 5-methyltetrahydropteroyltriglutamate--homocysteine methyltransferase (754 aa).

Residues 15-18 (RELK) and K114 contribute to the 5-methyltetrahydropteroyltri-L-glutamate site. L-homocysteine contacts are provided by residues 430–432 (IGS) and E483. Residues 430-432 (IGS) and E483 contribute to the L-methionine site. Residues 514 to 515 (RC) and W560 each bind 5-methyltetrahydropteroyltri-L-glutamate. D598 provides a ligand contact to L-homocysteine. Residue D598 participates in L-methionine binding. E604 contributes to the 5-methyltetrahydropteroyltri-L-glutamate binding site. 3 residues coordinate Zn(2+): H641, C643, and E665. H694 acts as the Proton donor in catalysis. Residue C726 participates in Zn(2+) binding.

This sequence belongs to the vitamin-B12 independent methionine synthase family. It depends on Zn(2+) as a cofactor.

The catalysed reaction is 5-methyltetrahydropteroyltri-L-glutamate + L-homocysteine = tetrahydropteroyltri-L-glutamate + L-methionine. It participates in amino-acid biosynthesis; L-methionine biosynthesis via de novo pathway; L-methionine from L-homocysteine (MetE route): step 1/1. In terms of biological role, catalyzes the transfer of a methyl group from 5-methyltetrahydrofolate to homocysteine resulting in methionine formation. The protein is 5-methyltetrahydropteroyltriglutamate--homocysteine methyltransferase of Campylobacter jejuni subsp. doylei (strain ATCC BAA-1458 / RM4099 / 269.97).